The following is a 137-amino-acid chain: SPbeta prophage-derived uncharacterized protein YoqU (137 aa).

In Bacillus subtilis (strain 168), this protein is SPbeta prophage-derived uncharacterized protein YoqU (yoqU).